The primary structure comprises 309 residues: ADP-L-glycero-D-manno-heptose-6-epimerase (309 aa).

NADP(+) is bound by residues 10–11 (FI), 31–32 (DN), Lys38, Lys53, 75–79 (EGACS), and Asn92. Tyr140 functions as the Proton acceptor in the catalytic mechanism. Lys144 serves as a coordination point for NADP(+). Asn169 contributes to the substrate binding site. 2 residues coordinate NADP(+): Val170 and Lys178. Residue Lys178 is the Proton acceptor of the active site. Residues Ser180, His187, 201–204 (FEGS), Arg209, and Tyr272 contribute to the substrate site.

This sequence belongs to the NAD(P)-dependent epimerase/dehydratase family. HldD subfamily. Homopentamer. NADP(+) serves as cofactor.

It catalyses the reaction ADP-D-glycero-beta-D-manno-heptose = ADP-L-glycero-beta-D-manno-heptose. It functions in the pathway nucleotide-sugar biosynthesis; ADP-L-glycero-beta-D-manno-heptose biosynthesis; ADP-L-glycero-beta-D-manno-heptose from D-glycero-beta-D-manno-heptose 7-phosphate: step 4/4. Its function is as follows. Catalyzes the interconversion between ADP-D-glycero-beta-D-manno-heptose and ADP-L-glycero-beta-D-manno-heptose via an epimerization at carbon 6 of the heptose. This chain is ADP-L-glycero-D-manno-heptose-6-epimerase, found in Enterobacter sp. (strain 638).